Consider the following 155-residue polypeptide: Ribosome maturation factor RimP (155 aa).

The protein belongs to the RimP family.

Its subcellular location is the cytoplasm. In terms of biological role, required for maturation of 30S ribosomal subunits. This is Ribosome maturation factor RimP from Staphylococcus haemolyticus (strain JCSC1435).